The following is a 289-amino-acid chain: Probable endonuclease 4 (289 aa).

Positions 76, 116, 152, 186, 189, 220, 233, 235, and 265 each coordinate Zn(2+).

Belongs to the AP endonuclease 2 family. Zn(2+) serves as cofactor.

The enzyme catalyses Endonucleolytic cleavage to 5'-phosphooligonucleotide end-products.. Functionally, endonuclease IV plays a role in DNA repair. It cleaves phosphodiester bonds at apurinic or apyrimidinic (AP) sites, generating a 3'-hydroxyl group and a 5'-terminal sugar phosphate. This chain is Probable endonuclease 4, found in Malacoplasma penetrans (strain HF-2) (Mycoplasma penetrans).